A 459-amino-acid polypeptide reads, in one-letter code: Ribulose bisphosphate carboxylase large chain (459 aa).

Residues 1–2 (MS) constitute a propeptide that is removed on maturation. P3 carries the N-acetylproline modification. The residue at position 14 (K14) is an N6,N6,N6-trimethyllysine. X123 and T173 together coordinate substrate. Catalysis depends on K175, which acts as the Proton acceptor. A substrate-binding site is contributed by K177. Mg(2+)-binding residues include K201, D203, and E204. At K201 the chain carries N6-carboxylysine. Residue H294 is the Proton acceptor of the active site. The substrate site is built by R295, H327, and S379.

The protein belongs to the RuBisCO large chain family. Type I subfamily. Heterohexadecamer of 8 large chains and 8 small chains; disulfide-linked. The disulfide link is formed within the large subunit homodimers. Mg(2+) serves as cofactor. The disulfide bond which can form in the large chain dimeric partners within the hexadecamer appears to be associated with oxidative stress and protein turnover.

Its subcellular location is the plastid. The protein resides in the chloroplast. It carries out the reaction 2 (2R)-3-phosphoglycerate + 2 H(+) = D-ribulose 1,5-bisphosphate + CO2 + H2O. It catalyses the reaction D-ribulose 1,5-bisphosphate + O2 = 2-phosphoglycolate + (2R)-3-phosphoglycerate + 2 H(+). RuBisCO catalyzes two reactions: the carboxylation of D-ribulose 1,5-bisphosphate, the primary event in carbon dioxide fixation, as well as the oxidative fragmentation of the pentose substrate in the photorespiration process. Both reactions occur simultaneously and in competition at the same active site. The sequence is that of Ribulose bisphosphate carboxylase large chain from Corynocarpus laevigatus (New Zealand laurel).